We begin with the raw amino-acid sequence, 146 residues long: Large ribosomal subunit protein uL15 (146 aa).

The segment at 1 to 57 (MDLSNLKAAEGSVHSDNFRRGRGHGSGNGKTAGKGHKGQKARSGAPRPGFEGGQMPL) is disordered.

The protein belongs to the universal ribosomal protein uL15 family. Part of the 50S ribosomal subunit.

Functionally, binds to the 23S rRNA. The polypeptide is Large ribosomal subunit protein uL15 (Agathobacter rectalis (strain ATCC 33656 / DSM 3377 / JCM 17463 / KCTC 5835 / VPI 0990) (Eubacterium rectale)).